The sequence spans 72 residues: Translation initiation factor IF-1 (72 aa).

One can recognise an S1-like domain in the interval 1-72 (MAKEDVIEVE…TRGRITYRFK (72 aa)).

It belongs to the IF-1 family. Component of the 30S ribosomal translation pre-initiation complex which assembles on the 30S ribosome in the order IF-2 and IF-3, IF-1 and N-formylmethionyl-tRNA(fMet); mRNA recruitment can occur at any time during PIC assembly.

It localises to the cytoplasm. One of the essential components for the initiation of protein synthesis. Stabilizes the binding of IF-2 and IF-3 on the 30S subunit to which N-formylmethionyl-tRNA(fMet) subsequently binds. Helps modulate mRNA selection, yielding the 30S pre-initiation complex (PIC). Upon addition of the 50S ribosomal subunit IF-1, IF-2 and IF-3 are released leaving the mature 70S translation initiation complex. The polypeptide is Translation initiation factor IF-1 (Listeria innocua serovar 6a (strain ATCC BAA-680 / CLIP 11262)).